Here is a 43-residue protein sequence, read N- to C-terminus: Thaumatin-like protein 1 (43 aa).

Belongs to the thaumatin family.

This is Thaumatin-like protein 1 from Glebionis coronaria (Crown daisy).